A 1140-amino-acid polypeptide reads, in one-letter code: Rho GTPase-activating protein gacF (1140 aa).

Disordered regions lie at residues 1-145 (MKTH…KPSR), 189-236 (ESDI…IEPI), 455-504 (INNN…STSF), 520-644 (EVQQ…GLES), 661-700 (ESSKLPKKSSLNRQMTIVNSNNIGNGDEKNSDCTTSDEDE), 720-759 (ETNDDNNNNDQINNSNSSNNIPKTTITTTTNNTTTTNNIS), 773-927 (AKVT…STLS), and 952-1095 (TSSP…NHTN). 2 stretches are compositionally biased toward low complexity: residues 10–26 (LGGLFSHSSSSPNLKSF) and 35–71 (QQQQQQQHNNNNNNNNNHQRQPSTTSTSSYIDSASSS). A coiled-coil region spans residues 28-55 (TEEVIHEQQQQQQQHNNNNNNNNNHQRQ). Residues 72-82 (IEETSGYLSKT) show a composition bias toward polar residues. Composition is skewed to low complexity over residues 83–136 (SSSS…TSSP) and 193–222 (DNGSSGGTTSSTGNIISHSKSPSSSSSSSS). The region spanning 234-409 (EPISQSTEDY…RLIENYHSIF (176 aa)) is the Rho-GAP domain. 2 stretches are compositionally biased toward low complexity: residues 456–475 (NNNSNSSNNNNSSSSSSPYK) and 482–493 (PKSSPKLNNRNS). A compositionally biased stretch (polar residues) spans 494–504 (ISPKLSSSTSF). The stretch at 517 to 548 (ISDEVQQEQQNQQQQQDEQQDEQQDEQQDEQQ) forms a coiled coil. A compositionally biased stretch (low complexity) spans 520–533 (EVQQEQQNQQQQQD). Residues 534-549 (EQQDEQQDEQQDEQQD) are compositionally biased toward acidic residues. Residues 550–566 (EQNSNSTSINTSSSSIT) show a composition bias toward low complexity. Residues 572–596 (STVQYLNRINTCRRPSSWTNNNRIK) show a composition bias toward polar residues. The span at 597–606 (QQQHHHHHHQ) shows a compositional bias: basic residues. The span at 607-631 (QQQQHQQHQQQQSSSSESNSSLTSS) shows a compositional bias: low complexity. 2 stretches are compositionally biased toward polar residues: residues 632–641 (PQKRLNSVNG) and 672–684 (NRQMTIVNSNNIG). Residues 724–759 (DNNNNDQINNSNSSNNIPKTTITTTTNNTTTTNNIS) are compositionally biased toward low complexity. Residues 773–796 (AKVTPTPTPAPMQTSSFLSTKQTN) are compositionally biased toward polar residues. A compositionally biased stretch (low complexity) spans 797-822 (SPSSSSSPSSTVSSTSSSPSSSLSSS). Residues 823–854 (IDNKTMSNVNYNRFQPANRTVSSPNVRNFSVP) show a composition bias toward polar residues. Low complexity-rich tracts occupy residues 891–914 (KPKNTTSSLSSSSSNISKSTNSTP), 952–1058 (TSSP…TSST), and 1065–1079 (HSNSLSQTPSSSSSS).

It is found in the cytoplasm. Functionally, rho GTPase-activating protein involved in the signal transduction pathway. In Dictyostelium discoideum (Social amoeba), this protein is Rho GTPase-activating protein gacF (gacF).